Here is a 197-residue protein sequence, read N- to C-terminus: Probable chorismate pyruvate-lyase (197 aa).

Positions 66, 104, and 169 each coordinate substrate.

The protein belongs to the UbiC family.

The protein localises to the cytoplasm. It catalyses the reaction chorismate = 4-hydroxybenzoate + pyruvate. The protein operates within cofactor biosynthesis; ubiquinone biosynthesis. Its function is as follows. Removes the pyruvyl group from chorismate, with concomitant aromatization of the ring, to provide 4-hydroxybenzoate (4HB) for the ubiquinone pathway. This is Probable chorismate pyruvate-lyase from Albidiferax ferrireducens (strain ATCC BAA-621 / DSM 15236 / T118) (Rhodoferax ferrireducens).